We begin with the raw amino-acid sequence, 803 residues long: Phenylalanine--tRNA ligase beta subunit (803 aa).

A tRNA-binding domain is found at 40 to 150 (SNKFYGIVIA…IDAPIGCNFY (111 aa)). One can recognise a B5 domain in the interval 405-480 (PKIKIIKLHR…RIYGYNHIPK (76 aa)). Positions 458 and 468 each coordinate Mg(2+). One can recognise an FDX-ACB domain in the interval 710 to 803 (SKFPKNYRDI…LKKHFNAIFR (94 aa)).

Belongs to the phenylalanyl-tRNA synthetase beta subunit family. Type 1 subfamily. In terms of assembly, tetramer of two alpha and two beta subunits. Mg(2+) serves as cofactor.

The protein resides in the cytoplasm. It carries out the reaction tRNA(Phe) + L-phenylalanine + ATP = L-phenylalanyl-tRNA(Phe) + AMP + diphosphate + H(+). This is Phenylalanine--tRNA ligase beta subunit from Blochmanniella floridana.